Reading from the N-terminus, the 396-residue chain is Elongation factor Tu (396 aa).

The region spanning 10-206 (KPHVNIGTIG…AVDESVPDPV (197 aa)) is the tr-type G domain. Residues 19-26 (GHVDHGKT) form a G1 region. 19–26 (GHVDHGKT) serves as a coordination point for GTP. Residue T26 coordinates Mg(2+). The G2 stretch occupies residues 62-66 (GITIN). The segment at 83-86 (DAPG) is G3. Residues 83-87 (DAPGH) and 138-141 (NKSD) each bind GTP. The tract at residues 138 to 141 (NKSD) is G4. The interval 176 to 178 (SGL) is G5.

It belongs to the TRAFAC class translation factor GTPase superfamily. Classic translation factor GTPase family. EF-Tu/EF-1A subfamily. In terms of assembly, monomer.

It is found in the cytoplasm. It catalyses the reaction GTP + H2O = GDP + phosphate + H(+). In terms of biological role, GTP hydrolase that promotes the GTP-dependent binding of aminoacyl-tRNA to the A-site of ribosomes during protein biosynthesis. The sequence is that of Elongation factor Tu from Paenarthrobacter aurescens (strain TC1).